Consider the following 98-residue polypeptide: NADH-ubiquinone oxidoreductase chain 4L (98 aa).

The next 3 membrane-spanning stretches (helical) occupy residues 1 to 21 (MSLVYMNIMIAFSISLLGLLM), 25 to 45 (HLMSSLLCLEGMMLALFILST), and 67 to 87 (AACEAAVGLSLLVMVSNTYGV).

Belongs to the complex I subunit 4L family. Core subunit of respiratory chain NADH dehydrogenase (Complex I) which is composed of 45 different subunits.

Its subcellular location is the mitochondrion inner membrane. The catalysed reaction is a ubiquinone + NADH + 5 H(+)(in) = a ubiquinol + NAD(+) + 4 H(+)(out). Functionally, core subunit of the mitochondrial membrane respiratory chain NADH dehydrogenase (Complex I) which catalyzes electron transfer from NADH through the respiratory chain, using ubiquinone as an electron acceptor. Part of the enzyme membrane arm which is embedded in the lipid bilayer and involved in proton translocation. The polypeptide is NADH-ubiquinone oxidoreductase chain 4L (MT-ND4L) (Talpa europaea (European mole)).